The following is a 180-amino-acid chain: Cytidylate kinase (180 aa).

7–15 is a binding site for ATP; it reads GLPGSGTTT.

This sequence belongs to the cytidylate kinase family. Type 2 subfamily.

It is found in the cytoplasm. The catalysed reaction is CMP + ATP = CDP + ADP. The enzyme catalyses dCMP + ATP = dCDP + ADP. This is Cytidylate kinase from Methanosarcina acetivorans (strain ATCC 35395 / DSM 2834 / JCM 12185 / C2A).